The chain runs to 476 residues: Aspartyl/glutamyl-tRNA(Asn/Gln) amidotransferase subunit B (476 aa).

It belongs to the GatB/GatE family. GatB subfamily. As to quaternary structure, heterotrimer of A, B and C subunits.

It carries out the reaction L-glutamyl-tRNA(Gln) + L-glutamine + ATP + H2O = L-glutaminyl-tRNA(Gln) + L-glutamate + ADP + phosphate + H(+). It catalyses the reaction L-aspartyl-tRNA(Asn) + L-glutamine + ATP + H2O = L-asparaginyl-tRNA(Asn) + L-glutamate + ADP + phosphate + 2 H(+). Its function is as follows. Allows the formation of correctly charged Asn-tRNA(Asn) or Gln-tRNA(Gln) through the transamidation of misacylated Asp-tRNA(Asn) or Glu-tRNA(Gln) in organisms which lack either or both of asparaginyl-tRNA or glutaminyl-tRNA synthetases. The reaction takes place in the presence of glutamine and ATP through an activated phospho-Asp-tRNA(Asn) or phospho-Glu-tRNA(Gln). The sequence is that of Aspartyl/glutamyl-tRNA(Asn/Gln) amidotransferase subunit B from Lactobacillus acidophilus (strain ATCC 700396 / NCK56 / N2 / NCFM).